A 574-amino-acid chain; its full sequence is Isocitrate dehydrogenase kinase/phosphatase (574 aa).

ATP contacts are provided by residues 315 to 321 and Lys-336; that span reads APGIRGM. The active site involves Asp-371.

Belongs to the AceK family.

It localises to the cytoplasm. It catalyses the reaction L-seryl-[isocitrate dehydrogenase] + ATP = O-phospho-L-seryl-[isocitrate dehydrogenase] + ADP + H(+). Bifunctional enzyme which can phosphorylate or dephosphorylate isocitrate dehydrogenase (IDH) on a specific serine residue. This is a regulatory mechanism which enables bacteria to bypass the Krebs cycle via the glyoxylate shunt in response to the source of carbon. When bacteria are grown on glucose, IDH is fully active and unphosphorylated, but when grown on acetate or ethanol, the activity of IDH declines drastically concomitant with its phosphorylation. The protein is Isocitrate dehydrogenase kinase/phosphatase of Escherichia coli (strain SMS-3-5 / SECEC).